A 340-amino-acid chain; its full sequence is Lysophospholipase L2 (340 aa).

The protein resides in the cell inner membrane. The catalysed reaction is a 1-acyl-sn-glycero-3-phosphocholine + H2O = sn-glycerol 3-phosphocholine + a fatty acid + H(+). The protein is Lysophospholipase L2 (pldB) of Escherichia coli O6:H1 (strain CFT073 / ATCC 700928 / UPEC).